The chain runs to 102 residues: NADH-quinone oxidoreductase subunit K 1 (102 aa).

Transmembrane regions (helical) follow at residues 5-25 (LSHYLTVSAILFTLGVFGIFL), 31-51 (IVILMSVELILLAVNINMVAF), and 65-85 (LFILTVAAAEAAIGLAILVVF).

It belongs to the complex I subunit 4L family. NDH-1 is composed of 14 different subunits. Subunits NuoA, H, J, K, L, M, N constitute the membrane sector of the complex.

Its subcellular location is the cell inner membrane. It catalyses the reaction a quinone + NADH + 5 H(+)(in) = a quinol + NAD(+) + 4 H(+)(out). NDH-1 shuttles electrons from NADH, via FMN and iron-sulfur (Fe-S) centers, to quinones in the respiratory chain. The immediate electron acceptor for the enzyme in this species is believed to be ubiquinone. Couples the redox reaction to proton translocation (for every two electrons transferred, four hydrogen ions are translocated across the cytoplasmic membrane), and thus conserves the redox energy in a proton gradient. This chain is NADH-quinone oxidoreductase subunit K 1, found in Rhizobium etli (strain ATCC 51251 / DSM 11541 / JCM 21823 / NBRC 15573 / CFN 42).